Consider the following 295-residue polypeptide: Transcription factor MYB34 (295 aa).

HTH myb-type domains are found at residues 9–61 (EEGI…ANYL) and 62–116 (RPDI…KKRL). 2 consecutive DNA-binding regions (H-T-H motif) follow at residues 37-61 (WRTL…ANYL) and 89-112 (WAAI…NTNL).

As to quaternary structure, can form complexes with MYC2, MYC3 or MYC4. In terms of tissue distribution, expressed in trichomes.

It is found in the nucleus. Its function is as follows. Transcription factor involved in tryptophan gene activation and in indole-3-acetic acid (IAA) and indolic glucosinolates (IG) biosynthesis. Acts as a direct transcriptional activator of both Trp synthesis genes and Trp secondary metabolism genes. The sequence is that of Transcription factor MYB34 (MYB34) from Arabidopsis thaliana (Mouse-ear cress).